Reading from the N-terminus, the 289-residue chain is uncharacterized protein (289 aa).

9 consecutive transmembrane segments (helical) span residues 4–24, 44–64, 68–88, 106–126, 138–158, 166–186, 196–216, 230–250, and 258–278; these read NLLA…GTVV, LNAL…LAYF, VALG…SLMF, IFWA…GRPL, IPVL…AEYV, ILGL…KAAV, GLIL…GTIV, LPAM…LVLG, and WEWI…IALS.

It is found in the cell membrane. This is an uncharacterized protein from Corynebacterium glutamicum (strain ATCC 13032 / DSM 20300 / JCM 1318 / BCRC 11384 / CCUG 27702 / LMG 3730 / NBRC 12168 / NCIMB 10025 / NRRL B-2784 / 534).